Consider the following 390-residue polypeptide: Chorismate synthase (390 aa).

Positions 39 and 45 each coordinate NADP(+). FMN is bound by residues 132–134, 253–254, Gly-298, 313–317, and Arg-339; these read RSS, NA, and KPIPT.

Belongs to the chorismate synthase family. Homotetramer. Requires FMNH2 as cofactor.

The enzyme catalyses 5-O-(1-carboxyvinyl)-3-phosphoshikimate = chorismate + phosphate. Its pathway is metabolic intermediate biosynthesis; chorismate biosynthesis; chorismate from D-erythrose 4-phosphate and phosphoenolpyruvate: step 7/7. Its function is as follows. Catalyzes the anti-1,4-elimination of the C-3 phosphate and the C-6 proR hydrogen from 5-enolpyruvylshikimate-3-phosphate (EPSP) to yield chorismate, which is the branch point compound that serves as the starting substrate for the three terminal pathways of aromatic amino acid biosynthesis. This reaction introduces a second double bond into the aromatic ring system. This chain is Chorismate synthase, found in Bacillus licheniformis (strain ATCC 14580 / DSM 13 / JCM 2505 / CCUG 7422 / NBRC 12200 / NCIMB 9375 / NCTC 10341 / NRRL NRS-1264 / Gibson 46).